Here is a 96-residue protein sequence, read N- to C-terminus: Cysteine protease immunity 1 (96 aa).

The chain is Cysteine protease immunity 1 from Escherichia coli O1:K1:H7 (strain ATCC 11775 / DSM 30083 / JCM 1649 / NBRC 102203 / NCTC 9001 / U5/41).